The chain runs to 354 residues: MKLQTTYPSNNYPIFVEHGAIDHISTYIDQFDQSFILIDEHVNQYFADKFNDILSYENVHKVIIPAGEKTKTFEQYQETLEYILSHHVTRNTAIIAVGGGATGDFAGFVAATLLRGVHFIQVPTTILAHDSSVGGKVGINSKQGKNLIGAFYRPTAVIYDLDFLKTLPFEQILSGYAEVYKHALLNGESATQDIEQHFKDREILQSLKGMDKYIAKGIETKLDIVVADEKEQGVRKFLNLGHTFGHAVEYYHKIPHGHAVMVGIIYQFIVANALFDSKHDINHYIQYLIQLGYPLDMITDLDFETLYQYMLSDKKNDKQGVQMVLIRQFGDIVVQHVDQLTLQHACEQLKTYFK.

NAD(+) contacts are provided by residues D39, Y45, 68-71, 100-104, 124-125, K136, K145, and 163-166; these read EKTK, GATGD, TT, and FLKT. Residues E178, H242, and H256 each contribute to the Zn(2+) site.

The protein belongs to the sugar phosphate cyclases superfamily. Dehydroquinate synthase family. NAD(+) is required as a cofactor. Co(2+) serves as cofactor. Requires Zn(2+) as cofactor.

The protein localises to the cytoplasm. The catalysed reaction is 7-phospho-2-dehydro-3-deoxy-D-arabino-heptonate = 3-dehydroquinate + phosphate. It functions in the pathway metabolic intermediate biosynthesis; chorismate biosynthesis; chorismate from D-erythrose 4-phosphate and phosphoenolpyruvate: step 2/7. In terms of biological role, catalyzes the conversion of 3-deoxy-D-arabino-heptulosonate 7-phosphate (DAHP) to dehydroquinate (DHQ). The chain is 3-dehydroquinate synthase from Staphylococcus aureus (strain MRSA252).